The chain runs to 273 residues: Proteasome subunit alpha (273 aa).

A disordered region spans residues 231–273 (DDGAAGQPPSSSDTDTSAAEARKPTASAGSADLEGPEPERPDS). Over residues 238–249 (PPSSSDTDTSAA) the composition is skewed to low complexity.

This sequence belongs to the peptidase T1A family. The 20S proteasome core is composed of 14 alpha and 14 beta subunits that assemble into four stacked heptameric rings, resulting in a barrel-shaped structure. The two inner rings, each composed of seven catalytic beta subunits, are sandwiched by two outer rings, each composed of seven alpha subunits. The catalytic chamber with the active sites is on the inside of the barrel. Has a gated structure, the ends of the cylinder being occluded by the N-termini of the alpha-subunits. Is capped by the proteasome-associated ATPase, ARC.

It is found in the cytoplasm. The protein operates within protein degradation; proteasomal Pup-dependent pathway. Its activity is regulated as follows. The formation of the proteasomal ATPase ARC-20S proteasome complex, likely via the docking of the C-termini of ARC into the intersubunit pockets in the alpha-rings, may trigger opening of the gate for substrate entry. Interconversion between the open-gate and close-gate conformations leads to a dynamic regulation of the 20S proteasome proteolysis activity. Its function is as follows. Component of the proteasome core, a large protease complex with broad specificity involved in protein degradation. This is Proteasome subunit alpha from Salinispora arenicola (strain CNS-205).